We begin with the raw amino-acid sequence, 1225 residues long: RNA-directed RNA polymerase VP2 (1225 aa).

The 231-residue stretch at 497–727 (LFLSFMPYTI…NSIVLLQQLV (231 aa)) folds into the RdRp catalytic domain.

Belongs to the reoviridae RNA-directed RNA polymerase family. In terms of assembly, interacts with VP6.

It carries out the reaction RNA(n) + a ribonucleoside 5'-triphosphate = RNA(n+1) + diphosphate. Functionally, RNA-directed RNA polymerase that is involved in transcription and genome replication. Following infection, it catalyzes the synthesis of fully conservative plus strands. After core assembly, which consists in recruitment of one capped plus-strand for each genomic segments and polymerase complexes, the polymerase switches mode and catalyzes the synthesis of complementary minus-strands. In Lymantria dispar (Gypsy moth), this protein is RNA-directed RNA polymerase VP2 (S2).